We begin with the raw amino-acid sequence, 436 residues long: T-box transcription factor T (436 aa).

The T-box DNA-binding region spans 51-219 (LWLRFKELTN…YNPFAKAFLD (169 aa)).

Monomer. Binds DNA as a monomer.

The protein resides in the nucleus. Functionally, involved in the transcriptional regulation of genes required for mesoderm formation and differentiation. Binds to a palindromic T site 5'-TTCACACCTAGGTGTGAA-3' DNA sequence and activates gene transcription when bound to such a site. This is T-box transcription factor T from Mus musculus (Mouse).